Here is a 1445-residue protein sequence, read N- to C-terminus: Spermatogenesis-associated protein 31E1 (1445 aa).

Residues 64–84 (WMMDFILTSVCGLVLLFLLLL) traverse the membrane as a helical segment. 2 disordered regions span residues 90 to 115 (PPSPPPGRKRSSREPQRERSGRSRSR) and 169 to 262 (VPAK…PDSS). The span at 101 to 110 (SREPQRERSG) shows a compositional bias: basic and acidic residues. Over residues 241 to 260 (VFPPSPQPHGPLASSPPPPD) the composition is skewed to pro residues. Residue asparagine 408 is glycosylated (N-linked (GlcNAc...) asparagine). Disordered stretches follow at residues 411–430 (TQPQQLPRPQQVSDATTVGN), 460–557 (NPSS…ERTQ), 592–619 (LSQPTAHLPQERPASWSPKSAPILPGVV), and 637–761 (QEQS…KEHL). Positions 664 to 681 (PQSQAEDTQQALLPSQPS) are enriched in polar residues. N-linked (GlcNAc...) asparagine glycans are attached at residues asparagine 819, asparagine 906, and asparagine 1160. Disordered stretches follow at residues 894–966 (FLGK…TCSL), 1143–1242 (RLPT…IGDK), 1254–1280 (KGQTPPESHFQRKISHHPQGLHPRKGG), and 1378–1445 (SPKA…CLAS). 2 stretches are compositionally biased toward polar residues: residues 906-915 (NRTTSKSVPT) and 1148-1165 (APLSTSQSVSGKNMTASQ). Residues 1202–1217 (DKGEAHRRPRTGEQGH) are compositionally biased toward basic and acidic residues.

It belongs to the SPATA31 family.

It localises to the membrane. May play a role in spermatogenesis. The protein is Spermatogenesis-associated protein 31E1 (SPATA31E1) of Homo sapiens (Human).